Reading from the N-terminus, the 1177-residue chain is Putative ATP-dependent RNA helicase TDRD12 (1177 aa).

The Tudor 1 domain maps to Thr56–Leu118. The 189-residue stretch at Trp447–Val635 folds into the Helicase ATP-binding domain. An ATP-binding site is contributed by Ser460–Leu467. A DEAH box motif is present at residues Asp574 to Glu577. Residues Ile900 to Phe999 enclose the Tudor 2 domain. A disordered region spans residues Glu1098–Arg1177. Residues Ser1100 to Gln1115 are compositionally biased toward polar residues.

As to quaternary structure, component of a mRNP complex containing PIWIL2, TDRD1 and piRNAs. Component of the PET complex, at least composed of EXD1, PIWIL2, TDRD12 and piRNAs.

The enzyme catalyses ATP + H2O = ADP + phosphate + H(+). In terms of biological role, probable ATP-binding RNA helicase required during spermatogenesis to repress transposable elements and preventing their mobilization, which is essential for the germline integrity. Acts via the piRNA metabolic process, which mediates the repression of transposable elements during meiosis by forming complexes composed of piRNAs and Piwi proteins and governs the methylation and subsequent repression of transposons. Involved in the secondary piRNAs metabolic process. Acts via the PET complex, a multiprotein complex required during the secondary piRNAs metabolic process for the PIWIL2 slicing-triggered loading of PIWIL4 piRNAs. In Homo sapiens (Human), this protein is Putative ATP-dependent RNA helicase TDRD12 (TDRD12).